Consider the following 372-residue polypeptide: Cytochrome b (372 aa).

4 helical membrane passes run 25–45 (FGSM…FLAI), 69–90 (WIMQ…YIHI), 105–125 (WLSG…GYVL), and 170–190 (FFAL…IHII). Histidine 75 and histidine 89 together coordinate heme b. Residues histidine 174 and histidine 188 each coordinate heme b. Residue histidine 193 participates in a ubiquinone binding. 4 helical membrane passes run 218–238 (YKDM…LSFS), 280–300 (LGGT…PFTH), 312–332 (LSQA…WTAS), and 339–358 (FVTI…ITIP).

It belongs to the cytochrome b family. In terms of assembly, the cytochrome bc1 complex contains 3 respiratory subunits (MT-CYB, CYC1 and UQCRFS1), 2 core proteins (UQCRC1 and UQCRC2) and probably 6 low-molecular weight proteins. Heme b is required as a cofactor.

It is found in the mitochondrion inner membrane. Functionally, component of the ubiquinol-cytochrome c reductase complex (complex III or cytochrome b-c1 complex) that is part of the mitochondrial respiratory chain. The b-c1 complex mediates electron transfer from ubiquinol to cytochrome c. Contributes to the generation of a proton gradient across the mitochondrial membrane that is then used for ATP synthesis. This is Cytochrome b (MT-CYB) from Naja multifasciata (Burrowing cobra).